Here is a 132-residue protein sequence, read N- to C-terminus: Glycine cleavage system H protein (132 aa).

The Lipoyl-binding domain maps to 24-106 (TVRVGLTDFA…YGAGWLLDVH (83 aa)). N6-lipoyllysine is present on Lys65.

The protein belongs to the GcvH family. In terms of assembly, the glycine cleavage system is composed of four proteins: P, T, L and H. Requires (R)-lipoate as cofactor.

The glycine cleavage system catalyzes the degradation of glycine. The H protein shuttles the methylamine group of glycine from the P protein to the T protein. The sequence is that of Glycine cleavage system H protein from Mycobacterium leprae (strain Br4923).